The primary structure comprises 370 residues: Chaperone protein DnaJ (370 aa).

Residues 6 to 70 enclose the J domain; sequence DYYEVLGVQR…EKRSMYDRFG (65 aa). The CR-type zinc finger occupies 128-208; it reads GVEKTIEYRR…CRGEGRIRQT (81 aa). 8 residues coordinate Zn(2+): Cys-141, Cys-144, Cys-158, Cys-161, Cys-182, Cys-185, Cys-196, and Cys-199. CXXCXGXG motif repeat units lie at residues 141–148, 158–165, 182–189, and 196–203; these read CPACRGSG, CPKCGGLG, CDMCRGEG, and CRECRGEG.

Belongs to the DnaJ family. As to quaternary structure, homodimer. Zn(2+) is required as a cofactor.

The protein localises to the cytoplasm. Its function is as follows. Participates actively in the response to hyperosmotic and heat shock by preventing the aggregation of stress-denatured proteins and by disaggregating proteins, also in an autonomous, DnaK-independent fashion. Unfolded proteins bind initially to DnaJ; upon interaction with the DnaJ-bound protein, DnaK hydrolyzes its bound ATP, resulting in the formation of a stable complex. GrpE releases ADP from DnaK; ATP binding to DnaK triggers the release of the substrate protein, thus completing the reaction cycle. Several rounds of ATP-dependent interactions between DnaJ, DnaK and GrpE are required for fully efficient folding. Also involved, together with DnaK and GrpE, in the DNA replication of plasmids through activation of initiation proteins. This Roseiflexus castenholzii (strain DSM 13941 / HLO8) protein is Chaperone protein DnaJ.